A 353-amino-acid chain; its full sequence is Chorismate synthase (353 aa).

Arg48 and Arg54 together coordinate NADP(+). Residues 125-127 (RSS), 238-239 (NA), Gly278, 293-297 (KPTSS), and Arg319 contribute to the FMN site.

The protein belongs to the chorismate synthase family. As to quaternary structure, homotetramer. FMNH2 serves as cofactor.

It catalyses the reaction 5-O-(1-carboxyvinyl)-3-phosphoshikimate = chorismate + phosphate. The protein operates within metabolic intermediate biosynthesis; chorismate biosynthesis; chorismate from D-erythrose 4-phosphate and phosphoenolpyruvate: step 7/7. In terms of biological role, catalyzes the anti-1,4-elimination of the C-3 phosphate and the C-6 proR hydrogen from 5-enolpyruvylshikimate-3-phosphate (EPSP) to yield chorismate, which is the branch point compound that serves as the starting substrate for the three terminal pathways of aromatic amino acid biosynthesis. This reaction introduces a second double bond into the aromatic ring system. The protein is Chorismate synthase of Bordetella pertussis (strain Tohama I / ATCC BAA-589 / NCTC 13251).